We begin with the raw amino-acid sequence, 383 residues long: Acetylornithine deacetylase (383 aa).

Residue His80 coordinates Zn(2+). Asp82 is an active-site residue. Zn(2+) is bound at residue Asp112. Residue Glu144 is part of the active site. Residues Glu145, Glu169, and His355 each contribute to the Zn(2+) site.

It belongs to the peptidase M20A family. ArgE subfamily. As to quaternary structure, homodimer. The cofactor is Zn(2+). Co(2+) serves as cofactor. Glutathione is required as a cofactor.

It localises to the cytoplasm. The enzyme catalyses N(2)-acetyl-L-ornithine + H2O = L-ornithine + acetate. Its pathway is amino-acid biosynthesis; L-arginine biosynthesis; L-ornithine from N(2)-acetyl-L-ornithine (linear): step 1/1. In terms of biological role, catalyzes the hydrolysis of the amide bond of N(2)-acetylated L-amino acids. Cleaves the acetyl group from N-acetyl-L-ornithine to form L-ornithine, an intermediate in L-arginine biosynthesis pathway, and a branchpoint in the synthesis of polyamines. In Salmonella typhimurium (strain LT2 / SGSC1412 / ATCC 700720), this protein is Acetylornithine deacetylase.